We begin with the raw amino-acid sequence, 263 residues long: MERQKISEKFSELREKKEGALICYVMAGDPSAEKTGEIVKALVNGGADIIELGFPFSDPVADGPTIQVAGQRSLAAGMDTQRYFELIKNLDVGIPLVCMTYYNPVFRYGVEKFVEKAADAGISGLIVPDIPVEEAADLKNSCEKHGLDLIFLIAPTTTEGRVQKILERGSGFLYLVSRLGVTGAREDVSSSTRELLSRVETGLPKAVGFGISTGEQAAEVRDAGADAVIVGSAFVKIIDEGKDVNERLEALAKELKSGIKRAS.

Catalysis depends on proton acceptor residues Glu51 and Asp62.

It belongs to the TrpA family. Tetramer of two alpha and two beta chains.

It carries out the reaction (1S,2R)-1-C-(indol-3-yl)glycerol 3-phosphate + L-serine = D-glyceraldehyde 3-phosphate + L-tryptophan + H2O. Its pathway is amino-acid biosynthesis; L-tryptophan biosynthesis; L-tryptophan from chorismate: step 5/5. Its function is as follows. The alpha subunit is responsible for the aldol cleavage of indoleglycerol phosphate to indole and glyceraldehyde 3-phosphate. The chain is Tryptophan synthase alpha chain from Methanosarcina barkeri (strain Fusaro / DSM 804).